A 61-amino-acid chain; its full sequence is Alpha-conotoxine-like Am1.4 (61 aa).

The signal sequence occupies residues 1 to 21 (MGMRMMFTVFLLVVLATTVVS). Positions 22–44 (FMSGRASHGRNAAASDLIALTIK) are excised as a propeptide.

The protein belongs to the conotoxin A superfamily. In terms of processing, is not hydroxylated. Post-translationally, contains 2 disulfide bonds. Expressed by the venom duct.

The protein localises to the secreted. Alpha-conotoxins act on postsynaptic membranes, they bind to the nicotinic acetylcholine receptors (nAChR) and thus inhibit them. The chain is Alpha-conotoxine-like Am1.4 from Conus amadis (Amadis cone).